The chain runs to 78 residues: Beta-defensin 105A (78 aa).

An N-terminal signal peptide occupies residues 1–27 (MALIKKTFFFLFAMFFILVQLSSGCQA). Intrachain disulfides connect Cys-43–Cys-74, Cys-53–Cys-67, and Cys-57–Cys-73.

This sequence belongs to the beta-defensin family.

It localises to the secreted. Its function is as follows. Has antimicrobial activity. In Pan troglodytes (Chimpanzee), this protein is Beta-defensin 105A (DEFB105A).